The chain runs to 928 residues: BCAS3 microtubule associated cell migration factor (928 aa).

M1 carries the N-acetylmethionine modification. The stretch at 69–114 (DLNDTSRNLEFHEIHSTGNEPPLLIMIGYSDGMQVWSIPISGEAQE) is one WD repeat. K215 participates in a covalent cross-link: Glycyl lysine isopeptide (Lys-Gly) (interchain with G-Cter in SUMO1); alternate. K215 participates in a covalent cross-link: Glycyl lysine isopeptide (Lys-Gly) (interchain with G-Cter in SUMO2); alternate. Required for recruitment to preautophagosomal structure in response to mitophagy regions lie at residues 254–312 (RGGA…SRRS) and 437–560 (YGGQ…IKAP). S461, S480, and S488 each carry phosphoserine. Disordered regions lie at residues 472–515 (TSKQ…PGNP) and 755–777 (TTVISSSSSVLQSHGPSDTPQPL). Composition is skewed to low complexity over residues 480 to 494 (SPVPGLSSSPSGSPL), 505 to 514 (NNFTNNNPGN), and 755 to 771 (TTVISSSSSVLQSHGPS). S838, S886, and S898 each carry phosphoserine. Positions 868–928 (ESPSRDVVGS…PLSLFPTGFP (61 aa)) are disordered. Residues 887–901 (IETLSNSSGSTSGSI) are compositionally biased toward low complexity.

It belongs to the BCAS3 family. Interacts with histone H3, ESR1, KAT2B and PELP1; the interactions occur in a estrogen-dependent manner. Interacts with beta-tubulin and VIM. Interacts (via C-terminal) with PHAF1; the interaction is requrired for the association with the phagophore. Expressed in stomach, liver, lung, kidney, prostate, testis, thyroid gland, adrenal gland, brain, heart, skeletal muscle, colon, spleen, small intestine, placenta, blood leukocyte and mammary epithelial cells. Expressed in undifferentiated ES cells. Expressed in blood islands and nascent blood vessels derived from differentiated ES cells into embryoid bodies (BD). Expressed in endothelial cells. Not detected in brain. Expressed in brain tumors (at protein level). Expressed in brain. Highly expressed in breast cancers and in glioma cell lines.

It is found in the nucleus. The protein resides in the cytoplasm. The protein localises to the cytoskeleton. Its subcellular location is the preautophagosomal structure. In terms of biological role, plays a role in angiogenesis. Participates in the regulation of cell polarity and directional endothelial cell migration by mediating both the activation and recruitment of CDC42 and the reorganization of the actin cytoskeleton at the cell leading edge. Promotes filipodia formation. Functions synergistically with PELP1 as a transcriptional coactivator of estrogen receptor-responsive genes. Stimulates histone acetyltransferase activity. Binds to chromatin. Plays a regulatory role in autophagic activity. In complex with PHAF1, associates with the preautophagosomal structure during both non-selective and selective autophagy. Probably binds phosphatidylinositol 3-phosphate (PtdIns3P) which would mediate the recruitment preautophagosomal structures. This chain is BCAS3 microtubule associated cell migration factor, found in Homo sapiens (Human).